Reading from the N-terminus, the 108-residue chain is FK506-binding protein 1 (108 aa).

The 89-residue stretch at 20-108 (GDNVTIHYVG…KFEVELLKVN (89 aa)) folds into the PPIase FKBP-type domain.

It belongs to the FKBP-type PPIase family. FKBP1 subfamily.

The protein resides in the cytoplasm. It catalyses the reaction [protein]-peptidylproline (omega=180) = [protein]-peptidylproline (omega=0). With respect to regulation, inhibited by both FK506 and rapamycin. Functionally, PPIases accelerate the folding of proteins. It catalyzes the cis-trans isomerization of proline imidic peptide bonds in oligopeptides. The protein is FK506-binding protein 1 (FRR1) of Cryptococcus neoformans var. grubii serotype A (strain H99 / ATCC 208821 / CBS 10515 / FGSC 9487) (Filobasidiella neoformans var. grubii).